The sequence spans 125 residues: Large ribosomal subunit protein bL12 (125 aa).

Belongs to the bacterial ribosomal protein bL12 family. As to quaternary structure, homodimer. Part of the ribosomal stalk of the 50S ribosomal subunit. Forms a multimeric L10(L12)X complex, where L10 forms an elongated spine to which 2 to 4 L12 dimers bind in a sequential fashion. Binds GTP-bound translation factors.

Functionally, forms part of the ribosomal stalk which helps the ribosome interact with GTP-bound translation factors. Is thus essential for accurate translation. The polypeptide is Large ribosomal subunit protein bL12 (Sinorhizobium medicae (strain WSM419) (Ensifer medicae)).